Here is a 481-residue protein sequence, read N- to C-terminus: Regulator of G-protein signaling 1 (481 aa).

The disordered stretch occupies residues 1-31; that stretch reads MPALHNPSSPPPSYEAVTSYRNGNSIDSGDK. Positions 33 to 227 are fungal-DR; the sequence is QQCSRLMKIT…SVHEIGKSKN (195 aa). Residues 232–312 enclose the DEP domain; sequence PVYSVSSPSP…KGVSYFLTGK (81 aa). The RGS domain maps to 344–474; sequence ILETILRKPN…AGDSLLKFLE (131 aa).

The protein resides in the nucleus. It localises to the cytoplasm. Its function is as follows. Negatively regulates pheromone signaling during mating. Acts in a negative feedback loop that is essential for the mating process. This loop acts to down-regulate cellular sensitivity to pheromone. Activated by ste11. The chain is Regulator of G-protein signaling 1 (rgs1) from Schizosaccharomyces pombe (strain 972 / ATCC 24843) (Fission yeast).